The primary structure comprises 493 residues: NADH-quinone oxidoreductase subunit M (493 aa).

14 consecutive transmembrane segments (helical) span residues 5–25 (PIIS…LLFI), 37–57 (VMYV…YILI), 89–109 (ISIL…IGSL), 115–135 (YIKE…GAFT), 139–159 (LLLF…IIGV), 172–192 (FFLY…YIYS), 216–236 (ILWW…PFHT), 251–271 (VILA…VLLP), 280–300 (FAIY…LVAL), 308–328 (MIAY…FSFT), 334–354 (GAIF…LIVG), 375–395 (MPVL…LPGT), 411–431 (VNVV…VYML), and 458–478 (IISI…PSSI).

The protein belongs to the complex I subunit 4 family.

The protein resides in the cell membrane. The enzyme catalyses a quinone + NADH + 5 H(+)(in) = a quinol + NAD(+) + 4 H(+)(out). In terms of biological role, NDH-1 shuttles electrons from NADH, via FMN and iron-sulfur (Fe-S) centers, to quinones in the respiratory chain. Couples the redox reaction to proton translocation (for every two electrons transferred, four hydrogen ions are translocated across the cytoplasmic membrane), and thus conserves the redox energy in a proton gradient. The polypeptide is NADH-quinone oxidoreductase subunit M (nuoM) (Rickettsia conorii (strain ATCC VR-613 / Malish 7)).